Here is a 235-residue protein sequence, read N- to C-terminus: MKRIFGAKNNKEPPPSIQDASDRINKRGDSVEEKVKRLDAELCKYKDQIKRTRPGPALEAIKARAMRVLKQKKMYEGQRDMLYNQTFNLDQVSFAAEGLKDAQQTMTALKSANKELKGMMKTVKIQDIDNLQDDMMDLMDESSEIQETLGRSYNVPDDIDEDDLLGELDALEADMGNETEADGVPSYLQPDKEPDLNDELNLPSAPMGHTGAPPGRAQAEDEWGLPAVPRASLRG.

The disordered stretch occupies residues 1-30 (MKRIFGAKNNKEPPPSIQDASDRINKRGDS). Basic and acidic residues predominate over residues 20–30 (ASDRINKRGDS). Residues 99–148 (LKDAQQTMTALKSANKELKGMMKTVKIQDIDNLQDDMMDLMDESSEIQET) are a coiled coil. The tract at residues 174 to 235 (DMGNETEADG…PAVPRASLRG (62 aa)) is disordered.

The protein belongs to the SNF7 family.

The protein resides in the endosome. It localises to the multivesicular body membrane. Probable peripherally associated component of the endosomal sorting required for transport complex III (ESCRT-III) which is involved in multivesicular bodies (MVBs) formation and sorting of endosomal cargo proteins into MVBs. The chain is Vacuolar protein sorting-associated protein 60.2 from Arabidopsis thaliana (Mouse-ear cress).